We begin with the raw amino-acid sequence, 79 residues long: UPF0349 protein GTNG_2908 (79 aa).

This sequence belongs to the UPF0349 family.

This Geobacillus thermodenitrificans (strain NG80-2) protein is UPF0349 protein GTNG_2908.